A 941-amino-acid polypeptide reads, in one-letter code: Isoleucine--tRNA ligase (941 aa).

The 'HIGH' region signature appears at 59-69; the sequence is PYANGNIHIGH. Glu-562 serves as a coordination point for L-isoleucyl-5'-AMP. The 'KMSKS' region motif lies at 603–607; it reads KMSKS. Lys-606 serves as a coordination point for ATP. 4 residues coordinate Zn(2+): Cys-904, Cys-907, Cys-924, and Cys-927.

This sequence belongs to the class-I aminoacyl-tRNA synthetase family. IleS type 1 subfamily. As to quaternary structure, monomer. Zn(2+) is required as a cofactor.

Its subcellular location is the cytoplasm. It carries out the reaction tRNA(Ile) + L-isoleucine + ATP = L-isoleucyl-tRNA(Ile) + AMP + diphosphate. Its function is as follows. Catalyzes the attachment of isoleucine to tRNA(Ile). As IleRS can inadvertently accommodate and process structurally similar amino acids such as valine, to avoid such errors it has two additional distinct tRNA(Ile)-dependent editing activities. One activity is designated as 'pretransfer' editing and involves the hydrolysis of activated Val-AMP. The other activity is designated 'posttransfer' editing and involves deacylation of mischarged Val-tRNA(Ile). This chain is Isoleucine--tRNA ligase, found in Haemophilus influenzae (strain PittEE).